We begin with the raw amino-acid sequence, 152 residues long: Protein-export protein SecB (152 aa).

This sequence belongs to the SecB family. As to quaternary structure, homotetramer, a dimer of dimers. One homotetramer interacts with 1 SecA dimer.

It is found in the cytoplasm. One of the proteins required for the normal export of preproteins out of the cell cytoplasm. It is a molecular chaperone that binds to a subset of precursor proteins, maintaining them in a translocation-competent state. It also specifically binds to its receptor SecA. This is Protein-export protein SecB from Dechloromonas aromatica (strain RCB).